A 727-amino-acid chain; its full sequence is 1,4-alpha-glucan branching enzyme GlgB (727 aa).

Aspartate 405 acts as the Nucleophile in catalysis. The Proton donor role is filled by glutamate 458.

The protein belongs to the glycosyl hydrolase 13 family. GlgB subfamily. As to quaternary structure, monomer.

The enzyme catalyses Transfers a segment of a (1-&gt;4)-alpha-D-glucan chain to a primary hydroxy group in a similar glucan chain.. The protein operates within glycan biosynthesis; glycogen biosynthesis. Catalyzes the formation of the alpha-1,6-glucosidic linkages in glycogen by scission of a 1,4-alpha-linked oligosaccharide from growing alpha-1,4-glucan chains and the subsequent attachment of the oligosaccharide to the alpha-1,6 position. The protein is 1,4-alpha-glucan branching enzyme GlgB of Yersinia pseudotuberculosis serotype O:1b (strain IP 31758).